A 168-amino-acid polypeptide reads, in one-letter code: Type-2 ice-structuring protein (168 aa).

The signal sequence occupies residues 1 to 17 (MLTVSLLVCAMMALTQA). The propeptide occupies 18–34 (DHDGVLKGTATEAGEVS). 5 disulfide bridges follow: C45–C56, C73–C163, C107–C138, C127–C149, and C139–C155. The 113-residue stretch at 52–164 (HGQRCFYSEA…CPASHASICA (113 aa)) folds into the C-type lectin domain.

It is found in the secreted. Its function is as follows. Has antifreeze activity to protect fish blood from freezing at subzero sea water temperatures. Binds to ice crystals and inhibits their growth. The thermal hysteresis (TH) activity, the ability to lower the blood freezing point, is approximately 0.45 degrees Celsius at 0.15 mM for this protein. This is Type-2 ice-structuring protein from Brachyopsis segaliensis (Sea poacher).